Reading from the N-terminus, the 388-residue chain is Calcium-binding and spermatid-specific protein 1 (388 aa).

The disordered stretch occupies residues 1-20; sequence MAEDGLPKIYSHPPAESTKT. Thr280 is subject to Phosphothreonine; by CK2. 2 positions are modified to phosphoserine: Ser312 and Ser344.

It is found in the cytoplasm. Its subcellular location is the mitochondrion inner membrane. The protein resides in the cell projection. The protein localises to the cilium. It localises to the flagellum. It is found in the cytoplasmic vesicle. Its subcellular location is the secretory vesicle. The protein resides in the acrosome. In terms of biological role, calcium-binding protein. Essential for maintaining the structural integrity of the sperm flagella. In Bos taurus (Bovine), this protein is Calcium-binding and spermatid-specific protein 1 (CABS1).